The sequence spans 153 residues: Ubiquitin-conjugating enzyme E2-18 kDa (153 aa).

The UBC core domain occupies 2 to 149 (AATRRLTREL…AEEFTKKNAE (148 aa)). The active-site Glycyl thioester intermediate is the Cys86.

It belongs to the ubiquitin-conjugating enzyme family.

The enzyme catalyses S-ubiquitinyl-[E1 ubiquitin-activating enzyme]-L-cysteine + [E2 ubiquitin-conjugating enzyme]-L-cysteine = [E1 ubiquitin-activating enzyme]-L-cysteine + S-ubiquitinyl-[E2 ubiquitin-conjugating enzyme]-L-cysteine.. It functions in the pathway protein modification; protein ubiquitination. In terms of biological role, catalyzes the covalent attachment of ubiquitin to other proteins. The chain is Ubiquitin-conjugating enzyme E2-18 kDa (Ubc84D) from Drosophila melanogaster (Fruit fly).